Consider the following 174-residue polypeptide: Large ribosomal subunit protein uL16 (174 aa).

The protein belongs to the universal ribosomal protein uL16 family.

The sequence is that of Large ribosomal subunit protein uL16 from Archaeoglobus fulgidus (strain ATCC 49558 / DSM 4304 / JCM 9628 / NBRC 100126 / VC-16).